Consider the following 97-residue polypeptide: YcgL domain-containing protein PFL_1496 (97 aa).

One can recognise a YcgL domain in the interval 3–87; that stretch reads RICSIYKSPR…AEDEYIEHLP (85 aa).

This is YcgL domain-containing protein PFL_1496 from Pseudomonas fluorescens (strain ATCC BAA-477 / NRRL B-23932 / Pf-5).